A 113-amino-acid polypeptide reads, in one-letter code: Ribonuclease P protein component (113 aa).

Belongs to the RnpA family. In terms of assembly, consists of a catalytic RNA component (M1 or rnpB) and a protein subunit.

It catalyses the reaction Endonucleolytic cleavage of RNA, removing 5'-extranucleotides from tRNA precursor.. Its function is as follows. RNaseP catalyzes the removal of the 5'-leader sequence from pre-tRNA to produce the mature 5'-terminus. It can also cleave other RNA substrates such as 4.5S RNA. The protein component plays an auxiliary but essential role in vivo by binding to the 5'-leader sequence and broadening the substrate specificity of the ribozyme. This is Ribonuclease P protein component from Ligilactobacillus salivarius (strain UCC118) (Lactobacillus salivarius).